Reading from the N-terminus, the 193-residue chain is Acyl-homoserine-lactone synthase (193 aa).

Belongs to the autoinducer synthase family.

The catalysed reaction is a fatty acyl-[ACP] + S-adenosyl-L-methionine = an N-acyl-L-homoserine lactone + S-methyl-5'-thioadenosine + holo-[ACP] + H(+). Required for the synthesis of N-(3-oxodecanoyl)-L-homoserine lactone (ODHL), an autoinducer molecule which binds to VanR. This is Acyl-homoserine-lactone synthase (vanI) from Vibrio anguillarum (Listonella anguillarum).